A 279-amino-acid chain; its full sequence is Acyl-coenzyme A thioesterase MBLAC2 (279 aa).

Ser-2 carries the post-translational modification N-acetylserine. Zn(2+) is bound by residues His-83, His-85, Asp-87, His-88, His-170, Asp-189, and His-231. A lipid anchor (S-palmitoyl cysteine) is attached at Cys-254.

It belongs to the metallo-beta-lactamase superfamily. Glyoxalase II family. Zn(2+) serves as cofactor. Palmitoylated on Cys-254 by ZDHHC20.

The protein localises to the endoplasmic reticulum membrane. It is found in the cell membrane. It carries out the reaction hexadecanoyl-CoA + H2O = hexadecanoate + CoA + H(+). It catalyses the reaction dodecanoyl-CoA + H2O = dodecanoate + CoA + H(+). The catalysed reaction is tetradecanoyl-CoA + H2O = tetradecanoate + CoA + H(+). The enzyme catalyses octadecanoyl-CoA + H2O = octadecanoate + CoA + H(+). It carries out the reaction a beta-lactam + H2O = a substituted beta-amino acid. With respect to regulation, beta-lactamase activity is inhibited by sulbactam. Its function is as follows. Acyl-CoA thioesterases are a group of enzymes that catalyze the hydrolysis of acyl-CoAs to the free fatty acid and coenzyme A (CoASH), providing the potential to regulate intracellular levels of acyl-CoAs, free fatty acids and CoASH. Has an acyl-CoA thioesterase activity towards the long chain fatty acyl-CoA thioester palmitoyl-CoA (hexadecanoyl-CoA; C16:0-CoA). Displays a substrate preference for fatty acyl-CoAs with chain-lengths C12-C18. Possesses beta-lactamase activity, catalyzing the hydrolysis of penicillin G and nitrocefin. Exhibits no activity towards other beta-lactam antibiotic classes including cephalosporins (cefotaxime) and carbapenems (imipenem). The sequence is that of Acyl-coenzyme A thioesterase MBLAC2 (MBLAC2) from Homo sapiens (Human).